Reading from the N-terminus, the 427-residue chain is ATP-dependent RNA helicase DDX39A (427 aa).

Over residues 1–19 the composition is skewed to acidic residues; the sequence is MAEQDVENDLLDYDEEEEP. Residues 1 to 34 are disordered; the sequence is MAEQDVENDLLDYDEEEEPQAPQESTPAPPKKDI. Alanine 2 is modified (N-acetylalanine). Lysine 31 participates in a covalent cross-link: Glycyl lysine isopeptide (Lys-Gly) (interchain with G-Cter in SUMO2). N6-acetyllysine; alternate is present on lysine 35. Lysine 35 participates in a covalent cross-link: Glycyl lysine isopeptide (Lys-Gly) (interchain with G-Cter in SUMO2); alternate. Position 37 is a phosphoserine (serine 37). Residues 44–72 carry the Q motif motif; the sequence is SGFRDFLLKPELLRAIVDCGFEHPSEVQH. The Helicase ATP-binding domain maps to 75–248; the sequence is IPQAILGMDV…RKFMQDPMEV (174 aa). 88–95 is a binding site for ATP; the sequence is AKSGMGKT. Residues lysine 154 and lysine 162 each participate in a glycyl lysine isopeptide (Lys-Gly) (interchain with G-Cter in SUMO2) cross-link. Threonine 171 is subject to Phosphothreonine. A DECD box motif is present at residues 195-198; sequence DECD. Glycyl lysine isopeptide (Lys-Gly) (interchain with G-Cter in SUMO2) cross-links involve residues lysine 240 and lysine 255. One can recognise a Helicase C-terminal domain in the interval 260–421; the sequence is GLQQYYVKLK…ELPEEIDIST (162 aa). Serine 426 bears the Phosphoserine mark.

Belongs to the DEAD box helicase family. DECD subfamily. As to quaternary structure, binds ALYREF/THOC4 and DDX39B/BAT1. Interacts with the apo-AREX complex component SARNP. Interacts with MX1. Interacts with MCM3AP isoform GANP. Interacts with ECD. Interacts with PHAX; this interaction stimulates PHAX RNA binding activity. In terms of assembly, (Microbial infection) Interacts with human cytomegalovirus/HHV-5 protein UL69. In terms of processing, SUMOylated by RANBP2; SUMOylation modification affects its ability to bind RNA. As to expression, detected in testis, and at lower levels in brain, kidney, lung, thymus, spleen and salivary gland.

It is found in the nucleus. It localises to the cytoplasm. It carries out the reaction ATP + H2O = ADP + phosphate + H(+). Functionally, helicase that plays an essential role in mRNA export and is involved in multiple steps in RNA metabolism including alternative splicing. Regulates nuclear mRNA export to the cytoplasm through association with ECD. Also involved in spliceosomal uridine-rich small nuclear RNA (U snRNA) export by stimulating the RNA binding of adapter PHAX. Plays a role in the negative regulation of type I IFN production by increasing the nuclear retention of antiviral transcripts and thus reducing their protein expression. Independently of the interferon pathway, plays an antiviral role against alphaviruses by binding to a 5' conserved sequence element in the viral genomic RNA. This Homo sapiens (Human) protein is ATP-dependent RNA helicase DDX39A (DDX39A).